A 434-amino-acid polypeptide reads, in one-letter code: Trigger factor (434 aa).

The 86-residue stretch at 160-245 folds into the PPIase FKBP-type domain; that stretch reads DDKVKMNFIG…LTEVQAANLP (86 aa).

This sequence belongs to the FKBP-type PPIase family. Tig subfamily.

It localises to the cytoplasm. The catalysed reaction is [protein]-peptidylproline (omega=180) = [protein]-peptidylproline (omega=0). Involved in protein export. Acts as a chaperone by maintaining the newly synthesized protein in an open conformation. Functions as a peptidyl-prolyl cis-trans isomerase. In Shewanella frigidimarina (strain NCIMB 400), this protein is Trigger factor.